Here is a 231-residue protein sequence, read N- to C-terminus: Chalcone--flavanone isomerase (231 aa).

Positions 46, 111, and 188 each coordinate substrate.

This sequence belongs to the chalcone isomerase family. In terms of tissue distribution, pericarp.

The enzyme catalyses a chalcone = a flavanone.. The protein operates within secondary metabolite biosynthesis; flavonoid biosynthesis. Functionally, catalyzes the intramolecular cyclization of bicyclic chalcones into tricyclic (S)-flavanones. Responsible for the isomerization of 4,2',4',6'-tetrahydroxychalcone (also termed chalcone) into naringenin. The chain is Chalcone--flavanone isomerase (CHI) from Zea mays (Maize).